The primary structure comprises 251 residues: Flap endonuclease Xni (251 aa).

Aspartate 104 provides a ligand contact to Mg(2+). In terms of domain architecture, 5'-3' exonuclease spans 160–249 (VSPGQLADFW…LDGNLQQLRL (90 aa)). Residues leucine 171, alanine 172, proline 180, valine 182, and isoleucine 185 each coordinate K(+). The segment at 184–189 (GIGPKS) is interaction with DNA.

This sequence belongs to the Xni family. It depends on Mg(2+) as a cofactor. K(+) serves as cofactor.

In terms of biological role, has flap endonuclease activity. During DNA replication, flap endonucleases cleave the 5'-overhanging flap structure that is generated by displacement synthesis when DNA polymerase encounters the 5'-end of a downstream Okazaki fragment. The sequence is that of Flap endonuclease Xni from Cronobacter sakazakii (strain ATCC BAA-894) (Enterobacter sakazakii).